Here is a 312-residue protein sequence, read N- to C-terminus: Translation initiation factor IF3-2, chloroplastic (312 aa).

A chloroplast-targeting transit peptide spans M1 to R55. Basic and acidic residues predominate over residues E253–T263. Positions E253–S312 are disordered. Low complexity predominate over residues N272–T282. Residues A283–P305 show a composition bias toward acidic residues.

This sequence belongs to the IF-3 family. In terms of assembly, monomer. In terms of tissue distribution, highly expressed in young, newly emerged leaves.

The protein localises to the plastid. It is found in the chloroplast. In terms of biological role, chloroplast translation initiation factor that is essential for the coordination of leaf and chloroplast development. IF-3 binds to the 30S ribosomal subunit and shifts the equilibrium between 70S ribosomes and their 50S and 30S subunits in favor of the free subunits, thus enhancing the availability of 30S subunits on which protein synthesis initiation begins. This is Translation initiation factor IF3-2, chloroplastic from Arabidopsis thaliana (Mouse-ear cress).